Here is a 211-residue protein sequence, read N- to C-terminus: Octanoyltransferase (211 aa).

The 176-residue stretch at 28-203 (GSAPETLLLV…HFQSLLKTWL (176 aa)) folds into the BPL/LPL catalytic domain. Substrate-binding positions include 66–73 (RGGDITYH), 133–135 (SIG), and 146–148 (GFA). Residue cysteine 164 is the Acyl-thioester intermediate of the active site.

This sequence belongs to the LipB family.

The protein resides in the cytoplasm. The enzyme catalyses octanoyl-[ACP] + L-lysyl-[protein] = N(6)-octanoyl-L-lysyl-[protein] + holo-[ACP] + H(+). It functions in the pathway protein modification; protein lipoylation via endogenous pathway; protein N(6)-(lipoyl)lysine from octanoyl-[acyl-carrier-protein]: step 1/2. Its function is as follows. Catalyzes the transfer of endogenously produced octanoic acid from octanoyl-acyl-carrier-protein onto the lipoyl domains of lipoate-dependent enzymes. Lipoyl-ACP can also act as a substrate although octanoyl-ACP is likely to be the physiological substrate. This is Octanoyltransferase from Syntrophotalea carbinolica (strain DSM 2380 / NBRC 103641 / GraBd1) (Pelobacter carbinolicus).